We begin with the raw amino-acid sequence, 429 residues long: Enolase (429 aa).

Glutamine 163 lines the (2R)-2-phosphoglycerate pocket. The active-site Proton donor is the glutamate 205. Mg(2+)-binding residues include aspartate 242, glutamate 287, and aspartate 314. Positions 339, 368, 369, and 390 each coordinate (2R)-2-phosphoglycerate. The Proton acceptor role is filled by lysine 339.

The protein belongs to the enolase family. Homooctamer. Mg(2+) serves as cofactor.

It localises to the cytoplasm. Its subcellular location is the secreted. The protein localises to the cell surface. The enzyme catalyses (2R)-2-phosphoglycerate = phosphoenolpyruvate + H2O. The protein operates within carbohydrate degradation; glycolysis; pyruvate from D-glyceraldehyde 3-phosphate: step 4/5. Functionally, catalyzes the reversible conversion of 2-phosphoglycerate (2-PG) into phosphoenolpyruvate (PEP). It is essential for the degradation of carbohydrates via glycolysis. This is Enolase from Zymomonas mobilis subsp. mobilis (strain ATCC 31821 / ZM4 / CP4).